The chain runs to 213 residues: Adenylate kinase (213 aa).

Residue 10 to 15 coordinates ATP; sequence GAGKGT. An NMP region spans residues 30–59; that stretch reads STGDIFRANIKNNTELGQKAKTYMDKGELV. Residues Thr-31, Arg-36, 57–59, 85–88, and Gln-92 each bind AMP; these read ELV and GFPR. The tract at residues 126 to 163 is LID; it reads GRRACVGCGATYHIQFNPTKVEGICDACGEKLILRDDD. Residue Arg-127 participates in ATP binding. Cys-130 and Cys-133 together coordinate Zn(2+). Residue 136–137 participates in ATP binding; sequence TY. Zn(2+) is bound by residues Cys-150 and Cys-153. Residues Arg-160 and Arg-171 each contribute to the AMP site. An ATP-binding site is contributed by Gln-199.

Belongs to the adenylate kinase family. Monomer.

It is found in the cytoplasm. It catalyses the reaction AMP + ATP = 2 ADP. It functions in the pathway purine metabolism; AMP biosynthesis via salvage pathway; AMP from ADP: step 1/1. In terms of biological role, catalyzes the reversible transfer of the terminal phosphate group between ATP and AMP. Plays an important role in cellular energy homeostasis and in adenine nucleotide metabolism. The sequence is that of Adenylate kinase from Lachnospira eligens (strain ATCC 27750 / DSM 3376 / VPI C15-48 / C15-B4) (Eubacterium eligens).